Here is a 102-residue protein sequence, read N- to C-terminus: Small ribosomal subunit protein bS6 (102 aa).

The protein belongs to the bacterial ribosomal protein bS6 family.

Functionally, binds together with bS18 to 16S ribosomal RNA. This Deinococcus geothermalis (strain DSM 11300 / CIP 105573 / AG-3a) protein is Small ribosomal subunit protein bS6.